The primary structure comprises 515 residues: Fatty acyl-CoA reductase 2 (515 aa).

The Cytoplasmic portion of the chain corresponds to 1–464 (MSTIAAFYGG…KAKQRLKRLR (464 aa)). Residues 465–484 (NIHYLFNTALFLIAWRLLIA) traverse the membrane as a helical segment. Topologically, residues 485–515 (RSQMARNVWFFIVSFCYKFLSYFRASSTLKV) are peroxisomal.

The protein belongs to the fatty acyl-CoA reductase family.

Its subcellular location is the peroxisome membrane. It catalyses the reaction a long-chain fatty acyl-CoA + 2 NADPH + 2 H(+) = a long-chain primary fatty alcohol + 2 NADP(+) + CoA. The enzyme catalyses a very long-chain fatty acyl-CoA + 2 NADPH + 2 H(+) = a very long-chain primary fatty alcohol + 2 NADP(+) + CoA. It carries out the reaction an ultra-long-chain fatty acyl-CoA + 2 NADPH + 2 H(+) = an ultra long-chain primary fatty alcohol + 2 NADP(+) + CoA. The catalysed reaction is hexadecanoyl-CoA + 2 NADPH + 2 H(+) = hexadecan-1-ol + 2 NADP(+) + CoA. It catalyses the reaction octadecanoyl-CoA + 2 NADPH + 2 H(+) = octadecan-1-ol + 2 NADP(+) + CoA. The enzyme catalyses eicosanoyl-CoA + 2 NADPH + 2 H(+) = eicosan-1-ol + 2 NADP(+) + CoA. It carries out the reaction docosanoyl-CoA + 2 NADPH + 2 H(+) = docosan-1-ol + 2 NADP(+) + CoA. The catalysed reaction is tetracosanoyl-CoA + 2 NADPH + 2 H(+) = tetracosan-1-ol + 2 NADP(+) + CoA. It catalyses the reaction hexacosanoyl-CoA + 2 NADPH + 2 H(+) = hexacosan-1-ol + 2 NADP(+) + CoA. The enzyme catalyses octacosanoyl-CoA + 2 NADPH + 2 H(+) = octacosan-1-ol + 2 NADP(+) + CoA. It carries out the reaction triacontanoyl-CoA + 2 NADPH + 2 H(+) = triacontan-1-ol + 2 NADP(+) + CoA. The catalysed reaction is 18-methylnonadecanoyl-CoA + 2 NADPH + 2 H(+) = 18-methylnonadecan-1-ol + 2 NADP(+) + CoA. It catalyses the reaction 20-methylheneicosanoyl-CoA + 2 NADPH + 2 H(+) = 20-methylheneicosan-1-ol + 2 NADP(+) + CoA. The enzyme catalyses 22-methyltricosanoyl-CoA + 2 NADPH + 2 H(+) = 22-methyltricosan-1-ol + 2 NADP(+) + CoA. It carries out the reaction 24-methylpentacosanoyl-CoA + 2 NADPH + 2 H(+) = 24-methylpentacosan-1-ol + 2 NADP(+) + CoA. Functionally, catalyzes the reduction of saturated but not unsaturated C16 or C18 fatty acyl-CoA to fatty alcohols (FAls). A lower activity can be observed with shorter fatty acyl-CoA substrates. Can produce very long-chain and ultra long-chain FAls, regardless of whether they have a straight or branched chain. Involved in the production of ether lipids/plasmalogens and wax monoesters whose synthesis requires FAls as substrates. This is Fatty acyl-CoA reductase 2 from Homo sapiens (Human).